The primary structure comprises 115 residues: Tyrosine-protein phosphatase 21 (115 aa).

In terms of domain architecture, Tyrosine-protein phosphatase spans 1-115 (WLMIVEKECR…EIGGDAPMVV (115 aa)). Position 83 (Asp-83) interacts with substrate.

This sequence belongs to the protein-tyrosine phosphatase family.

It catalyses the reaction O-phospho-L-tyrosyl-[protein] + H2O = L-tyrosyl-[protein] + phosphate. In Styela plicata (Wrinkled sea squirt), this protein is Tyrosine-protein phosphatase 21 (STY-21).